Reading from the N-terminus, the 353-residue chain is D-alanine--D-alanine ligase (353 aa).

One can recognise an ATP-grasp domain in the interval 141-349; the sequence is KAAFAAAGLP…LEELVSQLVI (209 aa). ATP is bound at residue 176-231; that stretch reads EAKLKYPCFVKPANLGSSVGISKAQNRNELLIGLDKAASLDRRIVVEQGVSARELE. Residues D302, E316, and N318 each contribute to the Mg(2+) site.

The protein belongs to the D-alanine--D-alanine ligase family. Requires Mg(2+) as cofactor. Mn(2+) serves as cofactor.

Its subcellular location is the cytoplasm. It catalyses the reaction 2 D-alanine + ATP = D-alanyl-D-alanine + ADP + phosphate + H(+). Its pathway is cell wall biogenesis; peptidoglycan biosynthesis. Cell wall formation. In Prochlorococcus marinus (strain MIT 9313), this protein is D-alanine--D-alanine ligase.